The primary structure comprises 543 residues: Glucose-6-phosphate isomerase (543 aa).

Catalysis depends on E353, which acts as the Proton donor. Catalysis depends on residues H384 and K512.

It belongs to the GPI family.

It is found in the cytoplasm. The catalysed reaction is alpha-D-glucose 6-phosphate = beta-D-fructose 6-phosphate. Its pathway is carbohydrate biosynthesis; gluconeogenesis. It participates in carbohydrate degradation; glycolysis; D-glyceraldehyde 3-phosphate and glycerone phosphate from D-glucose: step 2/4. Its function is as follows. Catalyzes the reversible isomerization of glucose-6-phosphate to fructose-6-phosphate. The sequence is that of Glucose-6-phosphate isomerase from Christiangramia forsetii (strain DSM 17595 / CGMCC 1.15422 / KT0803) (Gramella forsetii).